The following is a 1412-amino-acid chain: MNTKVSRQYAKISENSIQKISLALATPEDVLEWSRGEVHRPETINYKTFKPERGGLFDELIFGPLVDYKCSVCGRKYRKSNENQLCIATKECKIRGSRILSKMARRYSMGHIALNAPILHFWFFKIDHSIIAKLLGLKVFEGNSKVPTTITKTAIENLIYYKSHIVLETGGLKSLEQNKIIDISEAGLIYKNALIEIIEFYPPGSEEHNALAESISELADVTSSKIGREYGVDYYELNEIIEEFSSARIATGALAIEYLLDKIDLRAEKAAVEAELAGVQKQIYKNKKIILKNQKRDKLYKRLQVINAFINSGQDPKMMIIRNLPVIPADLRPLVQLDGSRHSTSDCNELYRRIIIRNNRLKRWKAAHAPVIIIQNEMRMLQEAVDALIDNQKKSTNQVTTKEGRPLKSISDALTGKKGRFRQNLLGKRVDYSGRSVIVVGPKLKMHQAGLPRKMAAVLFEPWIIRNLIQEKKVGSIKMARKMIEEENPIIWPHVAKVIQNKPIILNRAPTLHRLSIQAFEPVLVRAKAIQLHPLVTAGFNADFDGDQMAVHIPISPEAIRETQELMFADKNILGPKDGEPIVNPSQDMVLGLYYLSQEKAGAKGEGSFFSTYEAMLKAYEFRSVELHARVVLPFEQVKPFIAKTMRGHLISTVGKFILNNIFPANFPFIFDDNVDELELNYPSQIKKYVLPYGTNFREYIQNLKVNEPLNKKAIAKIVRQIFDTYDGLLAKEDIATVIDQLDFGNYQNRVLLYEKLRDYKKQKLPVPHLSKLSEFTIFEYSQLYKQLQQNGPVESYRVLEDHEKAELLEKIWFKYNNMVCSILDKIKDLGFHYSTLSGTSIAISDIKMAPKKHEFIKDGENYINKLNTFYAKGLITDDERYVLAIAKWTQIKNDIQEDLNQSIKDDNQNSLVMMMKSGARGNISNFVQLAGMRGLMANNVKALKVDAENERVVRSIVEVPVKSSFLEGLTSFEFYSSTHGARKGLTDTALNTAKSGYLTRRLVDVAQNIVVVAEDCFSDFGFVVKDIIDTKTNTIIVPLLERIEGRFLNKDVYDSRGIKLASAGSMVDLQTAKKIVAAGIKKVEIRSILSCHIKNSVCKKCYGKDLATNRLVSIGEAVGIIAAQSIGEPGTQLTMRTFHTGGVANVEDITGGFTRLIELIDSHEHPWGKPAKISPYYGIITKISDLAEKNAANKGFLITIEYKTSKNEKAEHIIRIEQSQKLRVKVGDKVIPGQKLVEGPIILKELLAVSDARTLQNYLLKEIQRIYRMQGISISDKYIEIIIRQMLSKVQIIENGDSNFFIGSIVDISDYQEVNGQLISQNKNPAFGNVIVKGAKQIPLLSNSFLAAASYQETSKILVHSVISSQIDKLEGLKENIIVGHKIPAGTNSNYEPKSKFDIRNPLSFFMKNNR.

Positions 543, 545, and 547 each coordinate Mg(2+). Residues Cys-1017, Cys-1092, Cys-1099, and Cys-1102 each coordinate Zn(2+).

The protein belongs to the RNA polymerase beta' chain family. As to quaternary structure, the RNAP catalytic core consists of 2 alpha, 1 beta, 1 beta' and 1 omega subunit. When a sigma factor is associated with the core the holoenzyme is formed, which can initiate transcription. It depends on Mg(2+) as a cofactor. Requires Zn(2+) as cofactor.

It catalyses the reaction RNA(n) + a ribonucleoside 5'-triphosphate = RNA(n+1) + diphosphate. DNA-dependent RNA polymerase catalyzes the transcription of DNA into RNA using the four ribonucleoside triphosphates as substrates. The polypeptide is DNA-directed RNA polymerase subunit beta' (Mesomycoplasma hyopneumoniae (strain 232) (Mycoplasma hyopneumoniae)).